Consider the following 194-residue polypeptide: Small COPII coat GTPase SAR1B (194 aa).

Positions 2–4 (FLV) match the STAR; SAR1-N-terminal activation recruitment. Required for the activation and subsequent recruitment to ER membrane motif. Residues 10–14 (MFLWL) form a mediates recruitment to ER membranes region. GDP-binding residues include N30, A31, G32, K33, T34, and T35. N30 lines the GTP pocket. Residues G32, K33, T34, and T35 each contribute to the GTP site. Residue D70 participates in Mg(2+) binding. GDP-binding residues include K131, D133, and I172. GTP-binding residues include K131, D133, and I172.

It belongs to the small GTPase superfamily. SAR1 family. In terms of assembly, homodimer; upon association with membrane. Part of the coat protein complex II/COPII, composed of SEC23/24 and SEC13/31 heterodimers, that it helps recruit and assemble on endoplasmic reticulum (ER) membranes at ER exit sites.

The protein localises to the endoplasmic reticulum membrane. It is found in the golgi apparatus. Its subcellular location is the golgi stack membrane. The protein resides in the cytoplasm. It localises to the cytosol. The enzyme catalyses GTP + H2O = GDP + phosphate + H(+). Small GTPases activation is mediated by guanine exchange factors (GEF), while inactivation through hydrolysis of the bound GTP is stimulated by GTPase activating proteins (GAP). Its function is as follows. Small GTPase that cycles between an active GTP-bound and an inactive GDP-bound state and mainly functions in vesicle-mediated endoplasmic reticulum (ER) to Golgi transport. The active GTP-bound form inserts into the endoplasmic reticulum membrane where it recruits the remainder of the coat protein complex II/COPII. The coat protein complex II assembling and polymerizing on endoplasmic reticulum membrane is responsible for both the sorting of cargos and the deformation and budding of membranes into vesicles destined to the Golgi. The chain is Small COPII coat GTPase SAR1B (sarB) from Dictyostelium discoideum (Social amoeba).